A 146-amino-acid chain; its full sequence is Aminoglycoside N(6')-acetyltransferase type 1 (146 aa).

An N-acetyltransferase domain is found at 1–146 (MNIMPVSESL…RVVYFKKHIG (146 aa)). Positions 22, 25, 66, and 79 each coordinate substrate. 81-83 (IYV) contacts acetyl-CoA. Asp115 serves as a coordination point for substrate. Acetyl-CoA is bound at residue Asn120. Substrate is bound at residue Glu136.

In terms of assembly, homodimer.

It catalyses the reaction kanamycin B + acetyl-CoA = N(6')-acetylkanamycin B + CoA + H(+). Catalyzes the transfer of an acetyl group from acetyl-CoA to the 6'-amino group of aminoglycoside molecules conferring resistance to antibiotics containing the purpurosamine ring including amikacin, kanamycin, tobramycin and netilmicin. The protein is Aminoglycoside N(6')-acetyltransferase type 1 of Acinetobacter genomosp. 13.